We begin with the raw amino-acid sequence, 245 residues long: Tyrosine recombinase XerD-like (245 aa).

The Core-binding (CB) domain maps to 1 to 72 (MITFISKFLA…AVNQFLFFLY (72 aa)). One can recognise a Tyr recombinase domain in the interval 90–245 (PLLTPAYQEV…PVTLEKYFKN (156 aa)). Active-site residues include Lys-151 and Arg-210. The active-site O-(3'-phospho-DNA)-tyrosine intermediate is Tyr-242.

The protein belongs to the 'phage' integrase family. XerD-like subfamily.

The protein resides in the cytoplasm. In terms of biological role, putative tyrosine recombinase. Not involved in the cutting and rejoining of the recombining DNA molecules on dif(SL) site. The protein is Tyrosine recombinase XerD-like of Streptococcus mutans serotype c (strain ATCC 700610 / UA159).